Consider the following 1224-residue polypeptide: ATP-dependent helicase/nuclease subunit A (1224 aa).

Residues 15 to 480 enclose the UvrD-like helicase ATP-binding domain; sequence VIWTDAQWQS…IDLSQNFRSR (466 aa). 36 to 43 contributes to the ATP binding site; it reads AAAGSGKT. The UvrD-like helicase C-terminal domain maps to 497-791; the sequence is EQVGEISYDD…RMMTIHSSKG (295 aa).

Belongs to the helicase family. AddA subfamily. As to quaternary structure, heterodimer of AddA and AddB/RexB. Mg(2+) serves as cofactor.

The catalysed reaction is Couples ATP hydrolysis with the unwinding of duplex DNA by translocating in the 3'-5' direction.. It carries out the reaction ATP + H2O = ADP + phosphate + H(+). In terms of biological role, the heterodimer acts as both an ATP-dependent DNA helicase and an ATP-dependent, dual-direction single-stranded exonuclease. Recognizes the chi site generating a DNA molecule suitable for the initiation of homologous recombination. The AddA nuclease domain is required for chi fragment generation; this subunit has the helicase and 3' -&gt; 5' nuclease activities. This chain is ATP-dependent helicase/nuclease subunit A, found in Staphylococcus epidermidis (strain ATCC 12228 / FDA PCI 1200).